Here is a 145-residue protein sequence, read N- to C-terminus: 3-hydroxyacyl-[acyl-carrier-protein] dehydratase FabZ (145 aa).

H47 is an active-site residue.

The protein belongs to the thioester dehydratase family. FabZ subfamily.

The protein resides in the cytoplasm. It catalyses the reaction a (3R)-hydroxyacyl-[ACP] = a (2E)-enoyl-[ACP] + H2O. In terms of biological role, involved in unsaturated fatty acids biosynthesis. Catalyzes the dehydration of short chain beta-hydroxyacyl-ACPs and long chain saturated and unsaturated beta-hydroxyacyl-ACPs. The polypeptide is 3-hydroxyacyl-[acyl-carrier-protein] dehydratase FabZ (Vesicomyosocius okutanii subsp. Calyptogena okutanii (strain HA)).